The primary structure comprises 294 residues: Thymidylate synthase (294 aa).

DUMP is bound by residues Arg30 and 156-157; that span reads RR. The Nucleophile role is filled by Cys176. Residues 196 to 199, Asn207, and 237 to 239 contribute to the dUMP site; these read RSGD and HVY. Asp199 is a (6R)-5,10-methylene-5,6,7,8-tetrahydrofolate binding site. Ala293 is a binding site for (6R)-5,10-methylene-5,6,7,8-tetrahydrofolate.

This sequence belongs to the thymidylate synthase family. In terms of assembly, homodimer.

The enzyme catalyses dUMP + (6R)-5,10-methylene-5,6,7,8-tetrahydrofolate = 7,8-dihydrofolate + dTMP. It functions in the pathway pyrimidine metabolism; dTTP biosynthesis. This Ascaris suum (Pig roundworm) protein is Thymidylate synthase.